The chain runs to 182 residues: NADH-quinone oxidoreductase subunit I (182 aa).

4Fe-4S ferredoxin-type domains lie at 52–82 (LTRD…LQKA) and 92–121 (DFFR…LTPD). [4Fe-4S] cluster is bound by residues Cys62, Cys65, Cys68, Cys72, Cys101, Cys104, Cys107, and Cys111.

The protein belongs to the complex I 23 kDa subunit family. As to quaternary structure, NDH-1 is composed of 13 different subunits. Subunits NuoA, H, J, K, L, M, N constitute the membrane sector of the complex. The cofactor is [4Fe-4S] cluster.

Its subcellular location is the cell inner membrane. It catalyses the reaction a quinone + NADH + 5 H(+)(in) = a quinol + NAD(+) + 4 H(+)(out). NDH-1 shuttles electrons from NADH, via FMN and iron-sulfur (Fe-S) centers, to quinones in the respiratory chain. The immediate electron acceptor for the enzyme in this species is believed to be ubiquinone. Couples the redox reaction to proton translocation (for every two electrons transferred, four hydrogen ions are translocated across the cytoplasmic membrane), and thus conserves the redox energy in a proton gradient. This is NADH-quinone oxidoreductase subunit I from Pseudomonas fluorescens (strain Pf0-1).